A 205-amino-acid polypeptide reads, in one-letter code: Outer-membrane lipoprotein LolB (205 aa).

A signal peptide spans 1-17 (MFLRHCITFTLIALLAG). Residue Cys18 is the site of N-palmitoyl cysteine attachment. The S-diacylglycerol cysteine moiety is linked to residue Cys18.

The protein belongs to the LolB family. In terms of assembly, monomer.

It is found in the cell outer membrane. Functionally, plays a critical role in the incorporation of lipoproteins in the outer membrane after they are released by the LolA protein. The chain is Outer-membrane lipoprotein LolB from Pseudomonas putida (strain W619).